Consider the following 510-residue polypeptide: Myosin-binding protein C, cardiac-type (510 aa).

3 Ig-like C2-type domains span residues 177 to 269, 270 to 347, and 378 to 438; these read KKST…VKEP, PYSS…TVKT, and RDQA…SFIP.

This sequence belongs to the immunoglobulin superfamily. MyBP family. As to expression, heart.

Functionally, thick filament-associated protein located in the crossbridge region of vertebrate striated muscle a bands. In vitro it binds MHC, F-actin and native thin filaments, and modifies the activity of actin-activated myosin ATPase. It may modulate muscle contraction or may play a more structural role. In Ambystoma mexicanum (Axolotl), this protein is Myosin-binding protein C, cardiac-type.